The primary structure comprises 24 residues: MNVQFTVNGRAASIDVPPNTLLVQ.

As to quaternary structure, heterotrimer composed of an alpha, a beta and a gamma chain. [2Fe-2S] cluster is required as a cofactor.

The catalysed reaction is an aldehyde + a quinone + H2O = a quinol + a carboxylate + H(+). The chain is Aldehyde dehydrogenase gamma chain from Comamonas testosteroni (Pseudomonas testosteroni).